A 424-amino-acid polypeptide reads, in one-letter code: MLGACGMQRYHQEALKKNRVMLARELVLKELMEHMIEKDIITIEMVEMIQAKSGSFSQNVEFLNLLPKRGPNAFSAFCEALQETKQQHLAEMILKTESSLRHGIATLEQRYGSNLPLPLSESCNSKRPRLIVEHSLDSGDGPPIPPVKHCTPEFYRDHQHLAYKLISEPRGLALILSNIHFSSEKDLEYRSGGDVDCASLELLFKHLGYQVTVFHDQSAEEMESALERFSKLPDHQDVDSCIVALLSHGVEGGVYGTDGKLLQLQEAFRLFDNANCPNLQNKPKMFFIQACRGDETDRGVDQRDGKERSDSPGCEESDANKEENLKLRLPTRSDMICGYACLKGTAAMRNTKRGSWYIEALTTVFAEDSRDTHVADMLVKVNRQIKQREGYAPGTEFHRCKEMSEYCSTLCRDLYLFPGYVPGK.

Positions Met-1 to Asp-140 are excised as a propeptide. In terms of domain architecture, CARD spans Met-7–Thr-96. Active-site residues include His-248 and Cys-291. Basic and acidic residues predominate over residues Thr-296–Asp-310. The tract at residues Thr-296–Leu-325 is disordered.

The protein belongs to the peptidase C14A family. Heterotetramer that consists of two anti-parallel arranged heterodimers, each one formed by a p18 subunit and a p12 subunit.

It catalyses the reaction Strict requirement for an Asp residue at P1, with 316-Asp being essential for proteolytic activity and has a preferred cleavage sequence of Val-Asp-Val-Ala-Asp-|-.. Involved in the activation cascade of caspases responsible for apoptosis execution. Might function by either activating some proteins required for cell death or inactivating proteins necessary for cell survival. In Gallus gallus (Chicken), this protein is Caspase-2 (CASP2).